The primary structure comprises 213 residues: Pyrrolidone-carboxylate peptidase (213 aa).

Catalysis depends on residues Glu81, Cys144, and His166.

It belongs to the peptidase C15 family. In terms of assembly, homotetramer.

It localises to the cytoplasm. It carries out the reaction Release of an N-terminal pyroglutamyl group from a polypeptide, the second amino acid generally not being Pro.. In terms of biological role, removes 5-oxoproline from various penultimate amino acid residues except L-proline. The sequence is that of Pyrrolidone-carboxylate peptidase from Pseudomonas fluorescens (strain SBW25).